The sequence spans 169 residues: Lutropin/choriogonadotropin subunit beta (169 aa).

The first 20 residues, 1 to 20 (MEMLQGLLLWMLLSVGGVWA), serve as a signal peptide directing secretion. Disulfide bonds link Cys-29-Cys-77, Cys-43-Cys-92, Cys-46-Cys-130, Cys-54-Cys-108, Cys-58-Cys-110, and Cys-113-Cys-120. Asn-33 carries N-linked (GlcNAc...) asparagine glycosylation. The segment at 131–169 (APQTSSSCKDPPSQPLTSTSTPTPGASRRSSHPLPINTS) is disordered. The segment covering 145–158 (PLTSTSTPTPGASR) has biased composition (low complexity).

The protein belongs to the glycoprotein hormones subunit beta family. As to quaternary structure, heterodimer of a common alpha chain and a unique beta chain which confers biological specificity to thyrotropin, lutropin, follitropin and gonadotropin.

The protein resides in the secreted. Functionally, promotes spermatogenesis and ovulation by stimulating the testes and ovaries to synthesize steroids. The sequence is that of Lutropin/choriogonadotropin subunit beta (LHB) from Equus asinus (Donkey).